A 172-amino-acid polypeptide reads, in one-letter code: Protein-export protein SecB (172 aa).

This sequence belongs to the SecB family. In terms of assembly, homotetramer, a dimer of dimers. One homotetramer interacts with 1 SecA dimer.

The protein localises to the cytoplasm. In terms of biological role, one of the proteins required for the normal export of preproteins out of the cell cytoplasm. It is a molecular chaperone that binds to a subset of precursor proteins, maintaining them in a translocation-competent state. It also specifically binds to its receptor SecA. The sequence is that of Protein-export protein SecB from Stenotrophomonas maltophilia (strain K279a).